Reading from the N-terminus, the 732-residue chain is Polyribonucleotide nucleotidyltransferase (732 aa).

Residues Asp-503 and Asp-509 each contribute to the Mg(2+) site. Residues 570-629 (PRLTSIQIPVDAIGLIIGKGGETIRSITEETGAEINIEDDGTVTIACSSPEGTNAAVETI) form the KH domain. One can recognise an S1 motif domain in the interval 639 to 713 (GNTYLGKVRD…GKNRFALSIK (75 aa)). A disordered region spans residues 710-732 (LSIKAVESEPEKSDENKAGTEGN). The segment covering 715-732 (VESEPEKSDENKAGTEGN) has biased composition (basic and acidic residues).

This sequence belongs to the polyribonucleotide nucleotidyltransferase family. The cofactor is Mg(2+).

It is found in the cytoplasm. It carries out the reaction RNA(n+1) + phosphate = RNA(n) + a ribonucleoside 5'-diphosphate. Its function is as follows. Involved in mRNA degradation. Catalyzes the phosphorolysis of single-stranded polyribonucleotides processively in the 3'- to 5'-direction. The protein is Polyribonucleotide nucleotidyltransferase of Chlorobium phaeobacteroides (strain DSM 266 / SMG 266 / 2430).